The primary structure comprises 436 residues: Xylose isomerase (436 aa).

Active-site residues include His100 and Asp103. Residues Glu231, Glu267, His270, Asp295, Asp306, Asp308, and Asp338 each contribute to the Mg(2+) site.

It belongs to the xylose isomerase family. In terms of assembly, homotetramer. Mg(2+) is required as a cofactor.

It localises to the cytoplasm. It carries out the reaction alpha-D-xylose = alpha-D-xylulofuranose. In Rhizobium etli (strain CIAT 652), this protein is Xylose isomerase.